Reading from the N-terminus, the 1071-residue chain is DNA-directed RNA polymerase subunit beta (1071 aa).

The protein belongs to the RNA polymerase beta chain family. In terms of assembly, in plastids the minimal PEP RNA polymerase catalytic core is composed of four subunits: alpha, beta, beta', and beta''. When a (nuclear-encoded) sigma factor is associated with the core the holoenzyme is formed, which can initiate transcription.

The protein localises to the plastid. It localises to the chloroplast. The catalysed reaction is RNA(n) + a ribonucleoside 5'-triphosphate = RNA(n+1) + diphosphate. Functionally, DNA-dependent RNA polymerase catalyzes the transcription of DNA into RNA using the four ribonucleoside triphosphates as substrates. The polypeptide is DNA-directed RNA polymerase subunit beta (Panax ginseng (Korean ginseng)).